The chain runs to 191 residues: Rho-related GTP-binding protein RhoG (191 aa).

Residue 10 to 17 participates in GTP binding; the sequence is GDGAVGKT. The short motif at 32–40 is the Effector region element; sequence YIPTVFDNY. Residues 57 to 61 and 115 to 118 each bind GTP; these read DTAGQ and TKKD. Residues threonine 138 and threonine 180 each carry the phosphothreonine modification. Cysteine 188 is modified (cysteine methyl ester). The S-geranylgeranyl cysteine moiety is linked to residue cysteine 188. A propeptide spans 189–191 (removed in mature form); the sequence is ILL.

Belongs to the small GTPase superfamily. Rho family. Interacts with ARHGEF26. Interacts with ARHGEF16. Interacts with UNC13D; the interaction increases RhoG affinity to the membrane lipids, targets UNC13D to membrane lipids and facilitates cytotoxic granule (CG) docking to the plasma membrane.

The protein localises to the cell membrane. Its function is as follows. Plays a role in immunological synaptic F-actin density and architecture organization. Regulates actin reorganization in lymphocytes, possibly through the modulation of Rac1 activity. Required for the formation of membrane ruffles during macropinocytosis. Plays a role in cell migration and is required for the formation of cup-like structures during trans-endothelial migration of leukocytes. Binds phospholipids in an activation-dependent manner; thereby acting as an anchor for other proteins to the plasma membrane (PM). Plays a role in exocytosis of cytotoxic granules (CG) by lymphocytes/Component of the exocytosis machinery in natural killer (NK) and CD8+ T cells. Promotes the docking of cytotoxic granules (CG) to the plasma membrane through the interaction with UNC13D. Involved in the cytotoxic activity of lymphocytes/primary CD8+ T cells. The polypeptide is Rho-related GTP-binding protein RhoG (RHOG) (Cricetus cricetus (Black-bellied hamster)).